The primary structure comprises 830 residues: MYRSGLLTSGGGSAALTALRAIGSRSSLSNGKFIWNVGKRFITSEIQEKDQQAGESNTATDTGIIHKTEQETLVYFDNVYPRDTSLWNPAQWYNLLLVNQSREAVRDKITEFASPPSNPIHGLELRSTIPVKRDGGVFATFLVPSKYTKAEVNAIIQKNTAEESSKSIFSFFTRASAFPVKGFPWIEDLRRLPTNTIKVLFQGPPLTEEEIYSLFRRYGTIIDIVPASDSVKNASVRYKSLKGAICAKNCVSGIEIHNTVLHIQYQQEARNFVISNFFVNHTRIAIPVMLAVLSIIAVLIFDPIREFSIEQKITHIYSLSWDNYWIRQIRNFTNSTVTSFRNYWGVNENAFAEKHLWEERIEKVNDLKMWLQENNNTFVVVRGPRGSGKNELIMQHTVGDRTNVLYLDCDKLIKSRTDAKFLRNAASQLGYFPIFPWINSVTSVIDLMVQGLTGQKSGLSETKEAQFRTMLTTALTSIRRIALKGYKSVIVDGGEDVNVKEEDYLQQHPEAKPIIVIDRYEGKSEINGFIYKELADWASMLVQMNVAHVIFLTETVSSNQQLSESLPNQVFKTLVLSDASKENSRKYVLSQLQSFVDSKQKSKEDIKITENIEAEKSKITDQIDDALEPLGGRMLDLQAFVRRVKSGEQPTEALDKMIEQASEQITQIFLSDKVDGIKSAQAWELIELLSAKSVVSYDDIVFKPLFKAAPELGIVELENSGLITVSRNRGVLDKIRPAKPLYKAAFYYLVNSQELSTILRTRYLLKVITFETGRIKKWEDELRPLGKSGDPKLFRGRFEYLSGKIETSNKVIVASEAEIKALSERKQNQK.

Residues 1-41 constitute a mitochondrion transit peptide; the sequence is MYRSGLLTSGGGSAALTALRAIGSRSSLSNGKFIWNVGKRF. Residues 42–283 lie on the Mitochondrial matrix side of the membrane; that stretch reads ITSEIQEKDQ…ISNFFVNHTR (242 aa). Residues 197–268 enclose the RRM domain; sequence IKVLFQGPPL…TVLHIQYQQE (72 aa). Residues 284–304 traverse the membrane as a helical segment; the sequence is IAIPVMLAVLSIIAVLIFDPI. The Mitochondrial intermembrane segment spans residues 305-830; it reads REFSIEQKIT…ALSERKQNQK (526 aa).

The protein belongs to the YME2 family.

The protein localises to the mitochondrion inner membrane. Functionally, plays a role in maintaining the mitochondrial genome and in controlling the mtDNA escape. Involved in the regulation of mtDNA nucleotide structure and number. May have a dispensable role in early maturation of pre-rRNA. This chain is Mitochondrial escape protein 2 (YME2), found in Vanderwaltozyma polyspora (strain ATCC 22028 / DSM 70294 / BCRC 21397 / CBS 2163 / NBRC 10782 / NRRL Y-8283 / UCD 57-17) (Kluyveromyces polysporus).